Here is a 197-residue protein sequence, read N- to C-terminus: Large ribosomal subunit protein uL11 (197 aa).

The protein belongs to the universal ribosomal protein uL11 family. Part of the ribosomal stalk of the 50S ribosomal subunit. Interacts with L10 and the large rRNA to form the base of the stalk. L10 forms an elongated spine to which L12 dimers bind in a sequential fashion forming a multimeric L10(L12)X complex. In terms of processing, one or more lysine residues are methylated.

Functionally, forms part of the ribosomal stalk which helps the ribosome interact with GTP-bound translation factors. The sequence is that of Large ribosomal subunit protein uL11 from Mycoplasma mobile (strain ATCC 43663 / 163K / NCTC 11711) (Mesomycoplasma mobile).